A 1404-amino-acid chain; its full sequence is DNA-directed RNA polymerase subunit beta' (1404 aa).

Zn(2+) contacts are provided by cysteine 60, cysteine 62, cysteine 75, and cysteine 78. 3 residues coordinate Mg(2+): aspartate 449, aspartate 451, and aspartate 453. The Zn(2+) site is built by cysteine 778, cysteine 852, cysteine 859, and cysteine 862. Residues 1380–1404 (LDRPLEEEEEEEIPQAIAEESDAEE) form a disordered region. The span at 1384–1404 (LEEEEEEEIPQAIAEESDAEE) shows a compositional bias: acidic residues.

It belongs to the RNA polymerase beta' chain family. In terms of assembly, the RNAP catalytic core consists of 2 alpha, 1 beta, 1 beta' and 1 omega subunit. When a sigma factor is associated with the core the holoenzyme is formed, which can initiate transcription. It depends on Mg(2+) as a cofactor. The cofactor is Zn(2+).

The enzyme catalyses RNA(n) + a ribonucleoside 5'-triphosphate = RNA(n+1) + diphosphate. DNA-dependent RNA polymerase catalyzes the transcription of DNA into RNA using the four ribonucleoside triphosphates as substrates. The sequence is that of DNA-directed RNA polymerase subunit beta' from Leptospira interrogans serogroup Icterohaemorrhagiae serovar Lai (strain 56601).